A 311-amino-acid polypeptide reads, in one-letter code: NAD kinase (311 aa).

The Proton acceptor role is filled by Asp89. NAD(+)-binding positions include Asp89 to Gly90, Arg94, Asn163 to Glu164, Asp193, and Thr204 to Ser209.

The protein belongs to the NAD kinase family. It depends on a divalent metal cation as a cofactor.

The protein resides in the cytoplasm. The enzyme catalyses NAD(+) + ATP = ADP + NADP(+) + H(+). Involved in the regulation of the intracellular balance of NAD and NADP, and is a key enzyme in the biosynthesis of NADP. Catalyzes specifically the phosphorylation on 2'-hydroxyl of the adenosine moiety of NAD to yield NADP. The polypeptide is NAD kinase (Mycobacterium leprae (strain Br4923)).